The following is a 128-amino-acid chain: Large-conductance mechanosensitive channel (128 aa).

The next 2 membrane-spanning stretches (helical) occupy residues 10-30 (FAMR…SAFG) and 76-96 (GLFI…FMMI).

The protein belongs to the MscL family. Homopentamer.

It localises to the cell inner membrane. Functionally, channel that opens in response to stretch forces in the membrane lipid bilayer. May participate in the regulation of osmotic pressure changes within the cell. The sequence is that of Large-conductance mechanosensitive channel from Haemophilus influenzae (strain 86-028NP).